The following is a 434-amino-acid chain: MGLNITGLIPKHMENRGKLTLKENLKIIENILEQRKAPENGIDEEHIKLLLRLLSFMDTDKDPNVVQIGEREARVYTKLQRDGVFDFCHGVGRSGNLIDPQPKAPGASVMYKLTNKLLESFLKALGLKVNAIATPVATGMSLALCLSAARKKYNSNVVIYPYAAHKSPIKATSFIGMRMRLVETVLDGDIVKVEVSDIEDAIRKEINENNNPVVLSTLTFFPPRKSDDIKEIAKICQDYDIPHIINGAYAIQNFYYIEKLKKALKYRIDAVVSSSDKNLFTPIGGGIIYTKDESFLKEISLTYPGRASANPIVNILISLLAIGTKDYLNLMKEQKECKKLLNELLEDLAKKKGEKVLNVENPISSCITTKKDPLDVAGKLYNLRVTGPRGVRRNDKFGTCYLKEYPYDYIVVNSAIGVKKEDIYKVIEKLDEVL.

The tract at residues 1–40 is tetramerization; that stretch reads MGLNITGLIPKHMENRGKLTLKENLKIIENILEQRKAPEN. A pyridoxal 5'-phosphate-binding site is contributed by arginine 71. The segment at 92-102 is phosphate loop (P-loop); it reads GRSGNLIDPQP. Substrate contacts are provided by arginine 93, serine 94, and glutamine 101. Position 277 is an N6-(pyridoxal phosphate)lysine (lysine 277). Residue arginine 306 coordinates substrate.

Belongs to the SepSecS family. In terms of assembly, homotetramer. It depends on pyridoxal 5'-phosphate as a cofactor.

It catalyses the reaction O-phospho-L-seryl-tRNA(Sec) + selenophosphate + H2O = L-selenocysteinyl-tRNA(Sec) + 2 phosphate. The protein operates within aminoacyl-tRNA biosynthesis; selenocysteinyl-tRNA(Sec) biosynthesis; selenocysteinyl-tRNA(Sec) from L-seryl-tRNA(Sec) (archaeal/eukaryal route): step 2/2. Converts O-phosphoseryl-tRNA(Sec) to selenocysteinyl-tRNA(Sec) required for selenoprotein biosynthesis. This chain is O-phosphoseryl-tRNA(Sec) selenium transferase (spcS), found in Methanocaldococcus jannaschii (strain ATCC 43067 / DSM 2661 / JAL-1 / JCM 10045 / NBRC 100440) (Methanococcus jannaschii).